We begin with the raw amino-acid sequence, 168 residues long: Disulfide bond formation protein B 1 (168 aa).

Over 1 to 14 the chain is Cytoplasmic; sequence MNEQTSRLNRERRF. A helical membrane pass occupies residues 15–31; sequence LVLLGLICLSLIGGALY. At 32–49 the chain is on the periplasmic side; the sequence is MQVVLGEAPCPLCILQRY. Cys-41 and Cys-44 are oxidised to a cystine. The chain crosses the membrane as a helical span at residues 50–65; that stretch reads ALLFIAVFAFIAAAMP. The Cytoplasmic portion of the chain corresponds to 66–72; that stretch reads GRRSLTF. The chain crosses the membrane as a helical span at residues 73–89; the sequence is FEALVVLSAIGGIVAAG. Topologically, residues 90 to 144 are periplasmic; the sequence is NHVYILANPMVSCGIDTLQPIVDDLPLAKLWPLAFQVDGFCSTPYPPILGLSLAQ. Cys-102 and Cys-130 are joined by a disulfide. Residues 145–163 form a helical membrane-spanning segment; that stretch reads WALVAFVLTAVLVPLGIYR. Residues 164 to 168 are Cytoplasmic-facing; sequence NRRQA.

It belongs to the DsbB family.

The protein resides in the cell inner membrane. In terms of biological role, required for disulfide bond formation in some periplasmic proteins. Acts by oxidizing the DsbA protein. The protein is Disulfide bond formation protein B 1 (dsbB1) of Pseudomonas putida (strain ATCC 47054 / DSM 6125 / CFBP 8728 / NCIMB 11950 / KT2440).